A 206-amino-acid polypeptide reads, in one-letter code: MPSLLITVLFLNVIIYVVNTVGAATVDGLLWLLYIQLPTGTSQIAREQRHMKREVVQLKHEMSSTSSQDEFAKWAKLRRRHDKALEAYEAKNNELTQSKSTFDMTIKIARWAATSGLMLFLQFWYSKTPIFTLPPGWIPWQVQWVLSFPRAPMGTVSIQIWGGACATVVALVGDAMKASLAYVSKPKIDRIKLGATMEGKEGKKRQ.

Over 1–4 (MPSL) the chain is Lumenal. A helical membrane pass occupies residues 5–24 (LITVLFLNVIIYVVNTVGAA). The Cytoplasmic portion of the chain corresponds to 25 to 110 (TVDGLLWLLY…TFDMTIKIAR (86 aa)). Positions 75 to 100 (AKLRRRHDKALEAYEAKNNELTQSKS) form a coiled coil. A helical transmembrane segment spans residues 111-131 (WAATSGLMLFLQFWYSKTPIF). Residues 132–155 (TLPPGWIPWQVQWVLSFPRAPMGT) are Lumenal-facing. A helical transmembrane segment spans residues 156–172 (VSIQIWGGACATVVALV). The Cytoplasmic segment spans residues 173–206 (GDAMKASLAYVSKPKIDRIKLGATMEGKEGKKRQ).

The protein belongs to the WRB/GET1 family. In terms of assembly, interacts with GET3.

The protein localises to the endoplasmic reticulum membrane. In terms of biological role, required for the post-translational delivery of tail-anchored (TA) proteins to the endoplasmic reticulum. Acts as a membrane receptor for soluble GET3, which recognizes and selectively binds the transmembrane domain of TA proteins in the cytosol. This is Protein GET1 from Ajellomyces capsulatus (strain G186AR / H82 / ATCC MYA-2454 / RMSCC 2432) (Darling's disease fungus).